An 80-amino-acid polypeptide reads, in one-letter code: Metallothionein-like protein type 2, MT2-4/MT2-25 (80 aa).

Belongs to the metallothionein superfamily. Type 15 family.

Functionally, metallothioneins have a high content of cysteine residues that bind various heavy metals. The chain is Metallothionein-like protein type 2, MT2-4/MT2-25 from Brassica juncea (Indian mustard).